The sequence spans 113 residues: Large ribosomal subunit protein uL22 (113 aa).

It belongs to the universal ribosomal protein uL22 family. As to quaternary structure, part of the 50S ribosomal subunit.

This protein binds specifically to 23S rRNA; its binding is stimulated by other ribosomal proteins, e.g. L4, L17, and L20. It is important during the early stages of 50S assembly. It makes multiple contacts with different domains of the 23S rRNA in the assembled 50S subunit and ribosome. In terms of biological role, the globular domain of the protein is located near the polypeptide exit tunnel on the outside of the subunit, while an extended beta-hairpin is found that lines the wall of the exit tunnel in the center of the 70S ribosome. The protein is Large ribosomal subunit protein uL22 of Desulforudis audaxviator (strain MP104C).